The chain runs to 340 residues: Conidiation-specific protein 13 (340 aa).

Residues 313-340 (AEAAAGISSGKPAADRKTKGKKGTKFRV) form a disordered region. The segment covering 330–340 (TKGKKGTKFRV) has biased composition (basic residues).

The polypeptide is Conidiation-specific protein 13 (con-13) (Neurospora crassa (strain ATCC 24698 / 74-OR23-1A / CBS 708.71 / DSM 1257 / FGSC 987)).